Consider the following 463-residue polypeptide: Glutamate--tRNA ligase 2 (463 aa).

The 'HIGH' region signature appears at 11–21 (PSPTGYLHIGG). The 'KMSKS' region motif lies at 240–244 (KLSKR). Lys-243 lines the ATP pocket.

It belongs to the class-I aminoacyl-tRNA synthetase family. Glutamate--tRNA ligase type 1 subfamily. In terms of assembly, monomer.

The protein resides in the cytoplasm. The enzyme catalyses tRNA(Glu) + L-glutamate + ATP = L-glutamyl-tRNA(Glu) + AMP + diphosphate. Functionally, catalyzes the attachment of glutamate to tRNA(Glu) in a two-step reaction: glutamate is first activated by ATP to form Glu-AMP and then transferred to the acceptor end of tRNA(Glu). This chain is Glutamate--tRNA ligase 2, found in Campylobacter jejuni subsp. jejuni serotype O:2 (strain ATCC 700819 / NCTC 11168).